The sequence spans 269 residues: Surfeit locus protein 4 (269 aa).

5 consecutive transmembrane segments (helical) span residues Leu64–Val84, Tyr92–Trp112, Phe179–Phe199, Leu203–Trp223, and Phe239–Gly259. The short motif at Lys266 to Trp269 is the Di-lysine motif element.

It belongs to the SURF4 family. As to quaternary structure, found in a complex composed at least of SURF4, TMED2 and TMED10. May interact with LMAN1. Interacts with ZFYVE27 and with KIF5A in a ZFYVE27-dependent manner. Interacts with STING1. Interacts with SAR1B. Interacts with TMEM41B.

The protein resides in the endoplasmic reticulum membrane. The protein localises to the endoplasmic reticulum-Golgi intermediate compartment membrane. Its subcellular location is the golgi apparatus membrane. In terms of biological role, endoplasmic reticulum cargo receptor that mediates the export of lipoproteins by recruiting cargos into COPII vesicles to facilitate their secretion. Acts as a cargo receptor for lipoproteins bearing both APOB and APOA1, thereby regulating lipoprotein delivery and the maintenance of lipid homeostasis. Synergizes with the GTPase SAR1B to mediate transport of circulating lipoproteins. Promotes the secretion of PCSK9. Also mediates the efficient secretion of erythropoietin (EPO). May also play a role in the maintenance of the architecture of the endoplasmic reticulum-Golgi intermediate compartment and of the Golgi. This is Surfeit locus protein 4 from Bos taurus (Bovine).